The sequence spans 149 residues: 6,7-dimethyl-8-ribityllumazine synthase (149 aa).

5-amino-6-(D-ribitylamino)uracil is bound by residues F22, 56 to 58 (ALE), and 80 to 82 (AVI). Position 85 to 86 (85 to 86 (ET)) interacts with (2S)-2-hydroxy-3-oxobutyl phosphate. The active-site Proton donor is the H88. N113 serves as a coordination point for 5-amino-6-(D-ribitylamino)uracil. R127 is a (2S)-2-hydroxy-3-oxobutyl phosphate binding site.

Belongs to the DMRL synthase family.

The catalysed reaction is (2S)-2-hydroxy-3-oxobutyl phosphate + 5-amino-6-(D-ribitylamino)uracil = 6,7-dimethyl-8-(1-D-ribityl)lumazine + phosphate + 2 H2O + H(+). It participates in cofactor biosynthesis; riboflavin biosynthesis; riboflavin from 2-hydroxy-3-oxobutyl phosphate and 5-amino-6-(D-ribitylamino)uracil: step 1/2. In terms of biological role, catalyzes the formation of 6,7-dimethyl-8-ribityllumazine by condensation of 5-amino-6-(D-ribitylamino)uracil with 3,4-dihydroxy-2-butanone 4-phosphate. This is the penultimate step in the biosynthesis of riboflavin. The polypeptide is 6,7-dimethyl-8-ribityllumazine synthase (Methylobacillus flagellatus (strain ATCC 51484 / DSM 6875 / VKM B-1610 / KT)).